The sequence spans 99 residues: DNA-binding protein Fis (99 aa).

The H-T-H motif DNA-binding region spans 75 to 94; sequence QTRAANMLGINRGTLRKKLK.

It belongs to the transcriptional regulatory Fis family. In terms of assembly, homodimer.

In terms of biological role, activates ribosomal RNA transcription. Plays a direct role in upstream activation of rRNA promoters. The chain is DNA-binding protein Fis from Haemophilus influenzae (strain 86-028NP).